The chain runs to 123 residues: Aberrant microtubules protein 1 (123 aa).

Functionally, required for normal microtubule organization. This Saccharomyces cerevisiae (strain ATCC 204508 / S288c) (Baker's yeast) protein is Aberrant microtubules protein 1 (ABM1).